The following is a 374-amino-acid chain: tRNA-specific 2-thiouridylase MnmA (374 aa).

Residues 17–24 and Met43 contribute to the ATP site; that span reads GMSGGVDS. The interval 103 to 105 is interaction with target base in tRNA; the sequence is NPD. The active-site Nucleophile is Cys108. A disulfide bond links Cys108 and Cys204. Residue Gly132 coordinates ATP. The segment at 154 to 156 is interaction with tRNA; that stretch reads KDQ. Cys204 functions as the Cysteine persulfide intermediate in the catalytic mechanism. Positions 316 to 317 are interaction with tRNA; that stretch reads RY.

It belongs to the MnmA/TRMU family.

The protein resides in the cytoplasm. The catalysed reaction is S-sulfanyl-L-cysteinyl-[protein] + uridine(34) in tRNA + AH2 + ATP = 2-thiouridine(34) in tRNA + L-cysteinyl-[protein] + A + AMP + diphosphate + H(+). Catalyzes the 2-thiolation of uridine at the wobble position (U34) of tRNA, leading to the formation of s(2)U34. This chain is tRNA-specific 2-thiouridylase MnmA, found in Pseudomonas entomophila (strain L48).